We begin with the raw amino-acid sequence, 725 residues long: MADVYELFLTCPKGLESLLLEEAQGLGLDEARAQVSAVRGQGSLEVAYRLCLWSRLANRVLLVLARFPVENAESMYMAVHAVNWEDHLDAGGTLAVEFSGKGSGIDNTHFGALKVKDAIVDNLRERSGRRPSVDKVNPDVRVHLHLDRGQATLSLDLSGHSLHQRGYRLQQGAAPLKENLAAAVLIRAGWPKIAAEGGALADPMCGVGTFLVEAALMAADIAPNLKRERWGFSSWLGHVPALWRKLHEEAQQRAAAGLARPPLWIRGYEADPRLIQPACNNIERAGVADWVKIYQGELATFEPRPDKGQTGLVICNPPYGERLGDEASLLYLYQNLGERLRQSCIGWSAGVFTGAPELGKRMGIRSHKQYAFWNGALACKLLMIQVEPRQFVTGERGERNDEGLARAPSEPARLSEGGQMFANRLQKNLRQLGKWARRDKIECYRLYDADMPEYALAVDIYGDWVHVQEYAAPKSIDPAKAQARLFDALAAIPQTLGVAQERVVVKRRERQAGKKQYERQSSEGKFLEVGEGDVRLLVNLTDYLDTGLFLDHRPMRLRIQKEAAGKRFLNLFCYTATATVHAARGGARSTTSVDLSKTYLDWARRNLSLNGFSDKQRLVHGDVMEWLREDDGQYELIFIDPPTFSNSKRMEGVFDVQRDHVELLDLAMARLAPGGVLYFSNNFRKFELDESVQARYAVEEITGETLDPDFARNPKIHRAWRITVR.

Positions 46-157 constitute a THUMP domain; that stretch reads VAYRLCLWSR…RGQATLSLDL (112 aa).

This sequence belongs to the methyltransferase superfamily. RlmKL family.

It is found in the cytoplasm. The enzyme catalyses guanosine(2445) in 23S rRNA + S-adenosyl-L-methionine = N(2)-methylguanosine(2445) in 23S rRNA + S-adenosyl-L-homocysteine + H(+). It catalyses the reaction guanosine(2069) in 23S rRNA + S-adenosyl-L-methionine = N(2)-methylguanosine(2069) in 23S rRNA + S-adenosyl-L-homocysteine + H(+). In terms of biological role, specifically methylates the guanine in position 2445 (m2G2445) and the guanine in position 2069 (m7G2069) of 23S rRNA. This Pseudomonas aeruginosa (strain ATCC 15692 / DSM 22644 / CIP 104116 / JCM 14847 / LMG 12228 / 1C / PRS 101 / PAO1) protein is Ribosomal RNA large subunit methyltransferase K/L.